A 1442-amino-acid polypeptide reads, in one-letter code: DNA polymerase III PolC-type (1442 aa).

An Exonuclease domain is found at 409 to 568 (YVIFDIETTG…YDAIVLADVF (160 aa)).

Belongs to the DNA polymerase type-C family. PolC subfamily.

It localises to the cytoplasm. It carries out the reaction DNA(n) + a 2'-deoxyribonucleoside 5'-triphosphate = DNA(n+1) + diphosphate. Its function is as follows. Required for replicative DNA synthesis. This DNA polymerase also exhibits 3' to 5' exonuclease activity. This Ureaplasma parvum serovar 3 (strain ATCC 700970) protein is DNA polymerase III PolC-type.